We begin with the raw amino-acid sequence, 957 residues long: ERC protein 2 (957 aa).

Polar residues predominate over residues 1 to 13; sequence MYGSARTISNPEG. Residues 1–44 are disordered; that stretch reads MYGSARTISNPEGSPSRSPRLPRSPRLGHRRTSSGGGGGTGKTL. The span at 14-25 shows a compositional bias: low complexity; it reads SPSRSPRLPRSP. S65 and S666 each carry phosphoserine. A coiled-coil region spans residues 140 to 917; sequence RQVRDSTMLD…RMKLMADNYD (778 aa). Positions 760–957 are involved in binding to RIMS1; it reads DQNKKVANLK…DQDDEEGIWA (198 aa). The tract at residues 918 to 957 is disordered; it reads DDHHHYHHHHHHHHHRSPGRSQHSNHRPSPDQDDEEGIWA. The segment covering 922 to 943 has biased composition (basic residues); that stretch reads HYHHHHHHHHHRSPGRSQHSNH. Residues 948–957 are compositionally biased toward acidic residues; it reads DQDDEEGIWA.

As to quaternary structure, interacts with BSN, ERC1, PPFIA1, PPFIA2, PPFIA3 and PPFIA4. Interacts through its C-terminus with the PDZ domain of RIMS1. Part of a complex consisting of ERC2, RIMS1 and UNC13A. Predominantly expressed in brain, including hippocampus, cortex, cerebellum, amygdala and olfactory bulb.

The protein localises to the cytoplasm. It is found in the synapse. The protein resides in the presynaptic active zone. Its subcellular location is the cytoskeleton. In terms of biological role, thought to be involved in the organization of the cytomatrix at the nerve terminals active zone (CAZ) which regulates neurotransmitter release. Seems to act together with BSN. May recruit liprin-alpha proteins to the CAZ. The chain is ERC protein 2 (Erc2) from Rattus norvegicus (Rat).